The primary structure comprises 61 residues: Small ribosomal subunit protein uS14 (61 aa).

Zn(2+) contacts are provided by Cys24, Cys27, Cys40, and Cys43.

It belongs to the universal ribosomal protein uS14 family. Zinc-binding uS14 subfamily. In terms of assembly, part of the 30S ribosomal subunit. Contacts proteins S3 and S10. It depends on Zn(2+) as a cofactor.

In terms of biological role, binds 16S rRNA, required for the assembly of 30S particles and may also be responsible for determining the conformation of the 16S rRNA at the A site. In Alkaliphilus metalliredigens (strain QYMF), this protein is Small ribosomal subunit protein uS14.